We begin with the raw amino-acid sequence, 180 residues long: Putative adenylate kinase (180 aa).

Residues Gly10, Gly12, Lys13, Thr14, and Thr15 each coordinate ATP. Residues 30-50 form an NMP region; the sequence is NLRDFALEKGIGEVKGDELEV. Residues 99–109 form an LID region; the sequence is ERGYSKDKIGE. ATP contacts are provided by Arg100 and Lys138.

Belongs to the adenylate kinase family. AK6 subfamily. In terms of assembly, interacts with uS11. Not a structural component of 40S pre-ribosomes, but transiently interacts with them by binding to uS11.

It carries out the reaction AMP + ATP = 2 ADP. It catalyses the reaction ATP + H2O = ADP + phosphate + H(+). In terms of biological role, broad-specificity nucleoside monophosphate (NMP) kinase that catalyzes the reversible transfer of the terminal phosphate group between nucleoside triphosphates and monophosphates. Also has ATPase activity. Involved in the late maturation steps of the 30S ribosomal particles, specifically 16S rRNA maturation. While NMP activity is not required for ribosome maturation, ATPase activity is. Associates transiently with small ribosomal subunit protein uS11. ATP hydrolysis breaks the interaction with uS11. May temporarily remove uS11 from the ribosome to enable a conformational change of the ribosomal RNA that is needed for the final maturation step of the small ribosomal subunit. The protein is Putative adenylate kinase of Pyrococcus furiosus (strain ATCC 43587 / DSM 3638 / JCM 8422 / Vc1).